Consider the following 115-residue polypeptide: Large ribosomal subunit protein bL19 (115 aa).

It belongs to the bacterial ribosomal protein bL19 family.

Its function is as follows. This protein is located at the 30S-50S ribosomal subunit interface and may play a role in the structure and function of the aminoacyl-tRNA binding site. The sequence is that of Large ribosomal subunit protein bL19 from Francisella tularensis subsp. holarctica (strain FTNF002-00 / FTA).